The chain runs to 1097 residues: DNA-directed RNA polymerase subunit beta (1097 aa).

The segment at 1072–1097 (QDVNPRRSTPSRPTYESLGVADYDED) is disordered.

It belongs to the RNA polymerase beta chain family. In terms of assembly, in cyanobacteria the RNAP catalytic core is composed of 2 alpha, 1 beta, 1 beta', 1 gamma and 1 omega subunit. When a sigma factor is associated with the core the holoenzyme is formed, which can initiate transcription.

The enzyme catalyses RNA(n) + a ribonucleoside 5'-triphosphate = RNA(n+1) + diphosphate. In terms of biological role, DNA-dependent RNA polymerase catalyzes the transcription of DNA into RNA using the four ribonucleoside triphosphates as substrates. The sequence is that of DNA-directed RNA polymerase subunit beta from Prochlorococcus marinus (strain MIT 9303).